Here is a 628-residue protein sequence, read N- to C-terminus: (-)-beta-pinene synthase 1, chloroplastic (628 aa).

The transit peptide at 1–51 (MDLISVLPSASKSCVCLHKPLSSSTHKLKPFCRTIRILGMPRPRKSVLMVS) directs the protein to the chloroplast. Mg(2+)-binding residues include aspartate 379, aspartate 383, and aspartate 531. Residues 379–383 (DDMYD) carry the DDXXD motif motif.

It belongs to the terpene synthase family. Tpsd subfamily. The cofactor is Mg(2+). Requires Mn(2+) as cofactor.

It is found in the plastid. It localises to the chloroplast. It catalyses the reaction (2E)-geranyl diphosphate = (1S,5S)-beta-pinene + diphosphate. The catalysed reaction is (2E)-geranyl diphosphate = (1S,5S)-alpha-pinene + diphosphate. Its pathway is terpene metabolism; oleoresin biosynthesis. It functions in the pathway secondary metabolite biosynthesis; terpenoid biosynthesis. Its function is as follows. Monoterpene synthase (TPS) involved in the biosynthesis of monoterpene natural products included in conifer oleoresin secretions and volatile emissions; these compounds contribute to biotic and abiotic stress defense against herbivores and pathogens. Catalyzes the conversion of (2E)-geranyl diphosphate (GPP) to (-)-beta-pinene and, to a lower extent, to (-)-alpha-pinene. This chain is (-)-beta-pinene synthase 1, chloroplastic, found in Pinus banksiana (Jack pine).